We begin with the raw amino-acid sequence, 1180 residues long: Pesticidal crystal protein Cry4Aa (1180 aa).

It belongs to the delta endotoxin family.

Its function is as follows. Promotes colloidosmotic lysis by binding to the midgut epithelial cells of insects. The chain is Pesticidal crystal protein Cry4Aa (cry4Aa) from Bacillus thuringiensis subsp. israelensis.